The sequence spans 350 residues: Protein RecA (350 aa).

67–74 (GPESSGKT) serves as a coordination point for ATP.

It belongs to the RecA family.

Its subcellular location is the cytoplasm. Functionally, can catalyze the hydrolysis of ATP in the presence of single-stranded DNA, the ATP-dependent uptake of single-stranded DNA by duplex DNA, and the ATP-dependent hybridization of homologous single-stranded DNAs. It interacts with LexA causing its activation and leading to its autocatalytic cleavage. In Chromobacterium violaceum (strain ATCC 12472 / DSM 30191 / JCM 1249 / CCUG 213 / NBRC 12614 / NCIMB 9131 / NCTC 9757 / MK), this protein is Protein RecA.